The chain runs to 416 residues: Gamma-glutamyl phosphate reductase (416 aa).

Belongs to the gamma-glutamyl phosphate reductase family.

It is found in the cytoplasm. The catalysed reaction is L-glutamate 5-semialdehyde + phosphate + NADP(+) = L-glutamyl 5-phosphate + NADPH + H(+). Its pathway is amino-acid biosynthesis; L-proline biosynthesis; L-glutamate 5-semialdehyde from L-glutamate: step 2/2. In terms of biological role, catalyzes the NADPH-dependent reduction of L-glutamate 5-phosphate into L-glutamate 5-semialdehyde and phosphate. The product spontaneously undergoes cyclization to form 1-pyrroline-5-carboxylate. The protein is Gamma-glutamyl phosphate reductase of Vibrio vulnificus (strain CMCP6).